The sequence spans 898 residues: Netrin receptor UNC5A (898 aa).

An N-terminal signal peptide occupies residues 1 to 25; it reads MAVRPGLWPALLGIVLTAWLRGSGA. Residues 26-361 are Extracellular-facing; sequence QQSATVANPV…TSSGPEDVAL (336 aa). One can recognise an Ig-like domain in the interval 44 to 141; it reads PHFLVEPEDV…SGTTKSQKAY (98 aa). 3 cysteine pairs are disulfide-bonded: C65–C126, C77–C124, and C170–C221. N107 and N218 each carry an N-linked (GlcNAc...) asparagine glycan. One can recognise an Ig-like C2-type domain in the interval 155–234; sequence PLAKEVSLEQ…NIVARRRSAS (80 aa). TSP type-1 domains are found at residues 242 to 296 and 298 to 350; these read NGGW…TLCP and DGSW…DLCL. W245, W248, and W251 each carry a C-linked (Man) tryptophan glycan. Disulfide bonds link C254-C291, C258-C295, and C269-C281. C-linked (Man) tryptophan glycans are attached at residues W301 and W304. Disulfide bonds link C310/C344, C314/C349, and C322/C334. N-linked (GlcNAc...) asparagine glycosylation is present at N343. Residues 362–382 form a helical membrane-spanning segment; that stretch reads YIGLVAVAVCLILLLLVLVLI. At 383–898 the chain is on the cytoplasmic side; sequence YCRKKEGLDS…GLFTVSEAEC (516 aa). One can recognise a ZU5 domain in the interval 497–640; it reads NMAYGTFNFL…LGRFALVGEA (144 aa). The segment at 661-679 is interaction with DCC; it reads SLEYNIRVYCLHDTHDALK. The 81-residue stretch at 817–897 folds into the Death domain; sequence QKIITSLDPP…AGLFTVSEAE (81 aa).

The protein belongs to the unc-5 family. In terms of assembly, homodimer and homooligomer. Interacts with the cytoplasmic part of DCC. Interacts with MAGED1. Interacts with PRKCABP, possibly mediating some interaction with PKC. Interacts (via extracellular domain) with FLRT2 (via extracellular domain). Interacts (via extracellular domain) with FLRT3 (via extracellular domain). In terms of processing, phosphorylated on cytoplasmic tyrosine residues. Phosphorylated by PKC in vitro. Post-translationally, proteolytically cleaved by caspases during apoptosis. The cleavage does not take place when the receptor is associated with netrin ligand. Its cleavage by caspases is required to induce apoptosis. The two extracellular TSRs of UNC5A contain WxxWxxWxxC motifs that can be C-mannosylated on all tryptophans. DPY19L1 preferentially mannosylates the first two tryptophans and DPY19L3 prefers the third. C-mannosylation by DPY19L1 is required for transport of UNC5A from the endoplasmic reticulum to the cell surface. Restricted to central nervous system.

Its subcellular location is the cell membrane. The protein resides in the membrane raft. It localises to the cell projection. The protein localises to the neuron projection. Functionally, receptor for netrin required for axon guidance. Functions in the netrin signaling pathway and promotes neurite outgrowth in response to NTN1. Mediates axon repulsion of neuronal growth cones in the developing nervous system in response to netrin. Axon repulsion in growth cones may be mediated by its association with DCC that may trigger signaling for repulsion. It also acts as a dependence receptor required for apoptosis induction when not associated with netrin ligand. The protein is Netrin receptor UNC5A (Unc5a) of Mus musculus (Mouse).